The chain runs to 127 residues: Large ribosomal subunit protein uL22 (127 aa).

The protein belongs to the universal ribosomal protein uL22 family. In terms of assembly, part of the 50S ribosomal subunit.

This protein binds specifically to 23S rRNA; its binding is stimulated by other ribosomal proteins, e.g. L4, L17, and L20. It is important during the early stages of 50S assembly. It makes multiple contacts with different domains of the 23S rRNA in the assembled 50S subunit and ribosome. Functionally, the globular domain of the protein is located near the polypeptide exit tunnel on the outside of the subunit, while an extended beta-hairpin is found that lines the wall of the exit tunnel in the center of the 70S ribosome. The sequence is that of Large ribosomal subunit protein uL22 from Brucella suis (strain ATCC 23445 / NCTC 10510).